Consider the following 89-residue polypeptide: U1-hexatoxin-Iw1e (89 aa).

An N-terminal signal peptide occupies residues Met1 to Ala18. 5 cysteine pairs are disulfide-bonded: Cys21–Cys32, Cys26–Cys40, Cys31–Cys66, Cys50–Cys74, and Cys68–Cys81. Positions Arg87–Glu89 are excised as a propeptide.

The protein belongs to the MIT-like AcTx family. Expressed by the venom gland.

The protein resides in the secreted. This chain is U1-hexatoxin-Iw1e, found in Illawarra wisharti (Illawarra funnel-web spider).